The following is a 311-amino-acid chain: Olfactory receptor 10D1B (311 aa).

Topologically, residues 1–24 are extracellular; sequence MKNLSVVTQFILLGIPHTEGVETM. Residues 25–45 traverse the membrane as a helical segment; the sequence is LFVLFFSFYIFTLVGNLLILL. At 46–54 the chain is on the cytoplasmic side; that stretch reads AIVSSSRLH. Residues 55 to 75 form a helical membrane-spanning segment; that stretch reads TPMYFFLCQLSVCDIFFPSVS. The Extracellular portion of the chain corresponds to 76–95; it reads SPKMLFYLSGNTPAISYAGC. An intrachain disulfide couples cysteine 95 to cysteine 187. Residues 96 to 116 traverse the membrane as a helical segment; it reads VSQLFFYHFLGGTECFLYTVM. At 117-137 the chain is on the cytoplasmic side; sequence AYDRFVAICYPLRYSVIMSHR. Residues 138 to 158 traverse the membrane as a helical segment; sequence ICAFLAMGTAVFGCIHSTFLT. At 159–192 the chain is on the extracellular side; sequence TLTFQLPYCGPKDVNYYFCDIPVVMKLACADTST. The helical transmembrane segment at 193 to 213 threads the bilayer; that stretch reads LEMVGFISVGLMPLSCFFFIL. At 214-237 the chain is on the cytoplasmic side; sequence TSYSCIVRSILQIRSTEGRHRAFS. Residues 238 to 258 traverse the membrane as a helical segment; the sequence is TCSAHFTAILLFYMPVIFIYL. The Extracellular segment spans residues 259–271; sequence RPTPSPWLDATVQ. Residues 272–288 form a helical membrane-spanning segment; sequence ILNNLVTPMLNPLIYSL. Over 289–311 the chain is Cytoplasmic; the sequence is RNKEVKSSLWTVLHLLCFLPKHL.

The protein belongs to the G-protein coupled receptor 1 family.

Its subcellular location is the cell membrane. Odorant receptor. The sequence is that of Olfactory receptor 10D1B from Mus musculus (Mouse).